The following is a 201-amino-acid chain: Large ribosomal subunit protein uL4 (201 aa).

The segment at 46-71 (QKTRAEVIGSGKKPWRQKGTGRARAG) is disordered.

This sequence belongs to the universal ribosomal protein uL4 family. Part of the 50S ribosomal subunit.

One of the primary rRNA binding proteins, this protein initially binds near the 5'-end of the 23S rRNA. It is important during the early stages of 50S assembly. It makes multiple contacts with different domains of the 23S rRNA in the assembled 50S subunit and ribosome. In terms of biological role, forms part of the polypeptide exit tunnel. In Shewanella sediminis (strain HAW-EB3), this protein is Large ribosomal subunit protein uL4.